Reading from the N-terminus, the 540-residue chain is Chaperonin GroEL 3 (540 aa).

ATP contacts are provided by residues 30 to 33 (TLGP), lysine 51, 87 to 91 (DGTTT), glycine 415, 479 to 481 (NAA), and aspartate 495.

Belongs to the chaperonin (HSP60) family. In terms of assembly, forms a cylinder of 14 subunits composed of two heptameric rings stacked back-to-back. Interacts with the co-chaperonin GroES.

Its subcellular location is the cytoplasm. The enzyme catalyses ATP + H2O + a folded polypeptide = ADP + phosphate + an unfolded polypeptide.. In terms of biological role, together with its co-chaperonin GroES, plays an essential role in assisting protein folding. The GroEL-GroES system forms a nano-cage that allows encapsulation of the non-native substrate proteins and provides a physical environment optimized to promote and accelerate protein folding. This chain is Chaperonin GroEL 3, found in Burkholderia ambifaria (strain ATCC BAA-244 / DSM 16087 / CCUG 44356 / LMG 19182 / AMMD) (Burkholderia cepacia (strain AMMD)).